Consider the following 210-residue polypeptide: Probable GTP-binding protein EngB (210 aa).

Residues 25-199 (TGIEVAFAGR…RQKLDSWFNE (175 aa)) enclose the EngB-type G domain. GTP-binding positions include 33 to 40 (GRSNAGKS), 60 to 64 (GRTQL), 78 to 81 (DLPG), 145 to 148 (TKAD), and 178 to 180 (FSS). The Mg(2+) site is built by Ser-40 and Thr-62.

This sequence belongs to the TRAFAC class TrmE-Era-EngA-EngB-Septin-like GTPase superfamily. EngB GTPase family. It depends on Mg(2+) as a cofactor.

Necessary for normal cell division and for the maintenance of normal septation. This Klebsiella pneumoniae subsp. pneumoniae (strain ATCC 700721 / MGH 78578) protein is Probable GTP-binding protein EngB.